A 721-amino-acid polypeptide reads, in one-letter code: Dipeptidyl-peptidase 5 (721 aa).

Positions 1 to 18 (MGAFRWLSIAAAASTALA) are cleaved as a signal peptide. Residues N75, N94, N151, and N254 are each glycosylated (N-linked (GlcNAc...) asparagine). The tract at residues 271–297 (ARPINGPDSPGTPKGIKGDSSSPVFSP) is disordered. N-linked (GlcNAc...) asparagine glycosylation is found at N380 and N450. The active-site Charge relay system is S560. N-linked (GlcNAc...) asparagine glycosylation is present at N607. Residues D643 and H675 each act as charge relay system in the active site.

It belongs to the peptidase S9C family. N-glycosylated. As to expression, expressed in mycelia and conidia.

The protein resides in the secreted. May be involved in metabolism of dipeptides or may affect host defense mechanisms. Has a substrate specificity limited to the hydrolysis of X-Ala, His-Ser, and Ser-Tyr dipeptides at a neutral pH optimum. The sequence is that of Dipeptidyl-peptidase 5 from Aspergillus fumigatus (strain ATCC MYA-4609 / CBS 101355 / FGSC A1100 / Af293) (Neosartorya fumigata).